The following is a 344-amino-acid chain: Phosphoribosylformylglycinamidine cyclo-ligase (344 aa).

Belongs to the AIR synthase family.

Its subcellular location is the cytoplasm. The enzyme catalyses 2-formamido-N(1)-(5-O-phospho-beta-D-ribosyl)acetamidine + ATP = 5-amino-1-(5-phospho-beta-D-ribosyl)imidazole + ADP + phosphate + H(+). It functions in the pathway purine metabolism; IMP biosynthesis via de novo pathway; 5-amino-1-(5-phospho-D-ribosyl)imidazole from N(2)-formyl-N(1)-(5-phospho-D-ribosyl)glycinamide: step 2/2. The chain is Phosphoribosylformylglycinamidine cyclo-ligase from Neisseria meningitidis serogroup C (strain 053442).